The following is a 388-amino-acid chain: Xylose isomerase (388 aa).

Catalysis depends on residues histidine 54 and aspartate 57. Glutamate 181, glutamate 217, histidine 220, aspartate 245, aspartate 255, aspartate 257, and aspartate 287 together coordinate Mg(2+).

This sequence belongs to the xylose isomerase family. Homotetramer. Mg(2+) is required as a cofactor.

It localises to the cytoplasm. The enzyme catalyses alpha-D-xylose = alpha-D-xylulofuranose. In terms of biological role, involved in D-xylose catabolism. The polypeptide is Xylose isomerase (xylA) (Streptomyces rubiginosus).